Reading from the N-terminus, the 308-residue chain is Taste receptor type 2 member 107 (308 aa).

Topologically, residues 1–7 are extracellular; the sequence is MLSAAEG. A helical membrane pass occupies residues 8 to 28; it reads ILLCVVTSEAVLGVLGDTFIA. Residues 29–43 lie on the Cytoplasmic side of the membrane; sequence LANCMEYAKNKKLSK. Residues 44–64 form a helical membrane-spanning segment; sequence IGFILIGLAISRIGVVWIIIL. The Extracellular segment spans residues 65–94; the sequence is QGYMQVFFPHILTFGNITEYITYIWVFLNH. N-linked (GlcNAc...) asparagine glycosylation occurs at N80. Residues 95-115 traverse the membrane as a helical segment; it reads LSVWFATNLNILYFLKIANFS. The Cytoplasmic segment spans residues 116 to 127; it reads NSVFLWLKSRVR. The chain crosses the membrane as a helical span at residues 128 to 148; the sequence is VVFIFLSGCLLTSWLLCFPQF. The Extracellular segment spans residues 149-180; it reads SKMLNNSKMYWGNTSWLQQQKNVFLINQSLTN. 3 N-linked (GlcNAc...) asparagine glycosylation sites follow: N153, N161, and N175. A helical membrane pass occupies residues 181 to 201; that stretch reads LGIFFFIIVSLITCFLLIVFL. At 202-232 the chain is on the cytoplasmic side; it reads WRHIRQMHSDGSGLRDLNTEAHVKAMRVLIS. A helical transmembrane segment spans residues 233-253; it reads FAVLFILHFVGLSIQVLCFFL. Residues 254–258 lie on the Extracellular side of the membrane; the sequence is PQNNL. A helical transmembrane segment spans residues 259-279; the sequence is LFITGLIATCLYPCGHSIILI. Residues 280 to 308 lie on the Cytoplasmic side of the membrane; that stretch reads LGNKQLKQASLKALQHLTCCETKRNLSVT.

Belongs to the G-protein coupled receptor T2R family.

The protein localises to the membrane. Functionally, putative taste receptor which may play a role in the perception of bitterness. The polypeptide is Taste receptor type 2 member 107 (Rattus norvegicus (Rat)).